A 324-amino-acid chain; its full sequence is Antihemorrhagic factor cHLP-A (324 aa).

Positions 1 to 19 (MNSLVALVLLGQIIGSTLS) are cleaved as a signal peptide. Cystatin fetuin-A-type domains lie at 21–130 (QLGP…VKCK) and 141–254 (RNCP…SDCV). 6 disulfide bridges follow: Cys28-Cys315, Cys85-Cys96, Cys110-Cys129, Cys143-Cys146, Cys205-Cys217, and Cys230-Cys253. A glycan (N-linked (GlcNAc...) asparagine) is linked at Asn204. Asn282 carries N-linked (GlcNAc...) asparagine glycosylation.

This sequence belongs to the fetuin family. In terms of assembly, homodimer. As to expression, expressed by the liver.

The protein localises to the secreted. Functionally, potent inhibitor of hemorrhagic activity but also proteolytic activities. Inhibition occurs by formation of a non-covalent complex between this protein and the proteinases at their metalloproteinase domains. The protein is Antihemorrhagic factor cHLP-A of Gloydius brevicauda (Korean slamosa snake).